The following is a 196-amino-acid chain: HTH-type transcriptional regulator EcpR (196 aa).

Positions 138–196 (KDIKKDKITDREMEIIRMTAQGMLPKSIARIENCSVKTVYTHRRNAEAKLYSKLYKLVQ) constitute an HTH luxR-type domain. Positions 162-181 (PKSIARIENCSVKTVYTHRR) form a DNA-binding region, H-T-H motif.

Belongs to the EcpR/MatA family.

It is found in the cytoplasm. Its function is as follows. Part of the ecpRABCDE operon, which encodes the E.coli common pilus (ECP). ECP is found in both commensal and pathogenic strains and plays a dual role in early-stage biofilm development and host cell recognition. Positively regulates the expression of the ecp operon by binding to two TTCCT boxes. The protein is HTH-type transcriptional regulator EcpR (ecpR) of Escherichia coli O157:H7.